Consider the following 487-residue polypeptide: Betaine aldehyde dehydrogenase (487 aa).

K(+)-binding residues include I27 and D93. 149-151 serves as a coordination point for NAD(+); the sequence is GAW. Catalysis depends on K161, which acts as the Charge relay system. NAD(+)-binding positions include 175–178 and 228–231; these read KPSE and SVPT. A K(+)-binding site is contributed by L243. E249 acts as the Proton acceptor in catalysis. NAD(+) contacts are provided by G251, C283, and E384. The Nucleophile role is filled by C283. C283 bears the Cysteine sulfenic acid (-SOH) mark. The K(+) site is built by K454 and G457. E461 serves as the catalytic Charge relay system.

The protein belongs to the aldehyde dehydrogenase family. Dimer of dimers. It depends on K(+) as a cofactor.

It catalyses the reaction betaine aldehyde + NAD(+) + H2O = glycine betaine + NADH + 2 H(+). It functions in the pathway amine and polyamine biosynthesis; betaine biosynthesis via choline pathway; betaine from betaine aldehyde: step 1/1. Involved in the biosynthesis of the osmoprotectant glycine betaine. Catalyzes the irreversible oxidation of betaine aldehyde to the corresponding acid. This chain is Betaine aldehyde dehydrogenase, found in Brucella abortus (strain S19).